The sequence spans 150 residues: 1,4-dihydroxy-2-naphthoyl-CoA hydrolase (150 aa).

D19 is a catalytic residue.

It belongs to the 4-hydroxybenzoyl-CoA thioesterase family. DHNA-CoA hydrolase subfamily.

It carries out the reaction 1,4-dihydroxy-2-naphthoyl-CoA + H2O = 1,4-dihydroxy-2-naphthoate + CoA + H(+). It functions in the pathway cofactor biosynthesis; phylloquinone biosynthesis. It participates in quinol/quinone metabolism; 1,4-dihydroxy-2-naphthoate biosynthesis; 1,4-dihydroxy-2-naphthoate from chorismate: step 7/7. In terms of biological role, catalyzes the hydrolysis of 1,4-dihydroxy-2-naphthoyl-CoA (DHNA-CoA) to 1,4-dihydroxy-2-naphthoate (DHNA), a reaction involved in phylloquinone (vitamin K1) biosynthesis. The polypeptide is 1,4-dihydroxy-2-naphthoyl-CoA hydrolase (Prochlorococcus marinus (strain MIT 9312)).